A 475-amino-acid chain; its full sequence is Cobyric acid synthase (475 aa).

A GATase cobBQ-type domain is found at 244 to 431 (KLNVVVPVLT…LHGFFDEADV (188 aa)). The active-site Nucleophile is Cys-325. The active site involves His-423.

Belongs to the CobB/CobQ family. CobQ subfamily.

Its pathway is cofactor biosynthesis; adenosylcobalamin biosynthesis. Its function is as follows. Catalyzes amidations at positions B, D, E, and G on adenosylcobyrinic A,C-diamide. NH(2) groups are provided by glutamine, and one molecule of ATP is hydrogenolyzed for each amidation. This Vibrio campbellii (strain ATCC BAA-1116) protein is Cobyric acid synthase.